A 111-amino-acid chain; its full sequence is Rubredoxin (111 aa).

A Rubredoxin-like domain is found at L11–I62. The Fe cation site is built by C16, C19, C49, and C52.

The protein belongs to the rubredoxin family. Fe(3+) is required as a cofactor.

Rubredoxin is a small nonheme, iron protein lacking acid-labile sulfide. Its single Fe, chelated to 4 Cys, functions as an electron acceptor and may also stabilize the conformation of the molecule. Could be involved in hydrogenase-linked redox processes. The polypeptide is Rubredoxin (rub) (Trichormus variabilis (strain ATCC 29413 / PCC 7937) (Anabaena variabilis)).